Reading from the N-terminus, the 273-residue chain is Ribosomal RNA small subunit methyltransferase A (273 aa).

6 residues coordinate S-adenosyl-L-methionine: asparagine 20, leucine 22, glycine 47, glutamate 68, aspartate 90, and asparagine 110.

Belongs to the class I-like SAM-binding methyltransferase superfamily. rRNA adenine N(6)-methyltransferase family. RsmA subfamily.

It is found in the cytoplasm. The catalysed reaction is adenosine(1518)/adenosine(1519) in 16S rRNA + 4 S-adenosyl-L-methionine = N(6)-dimethyladenosine(1518)/N(6)-dimethyladenosine(1519) in 16S rRNA + 4 S-adenosyl-L-homocysteine + 4 H(+). Its function is as follows. Specifically dimethylates two adjacent adenosines (A1518 and A1519) in the loop of a conserved hairpin near the 3'-end of 16S rRNA in the 30S particle. May play a critical role in biogenesis of 30S subunits. This chain is Ribosomal RNA small subunit methyltransferase A, found in Chlorobium luteolum (strain DSM 273 / BCRC 81028 / 2530) (Pelodictyon luteolum).